Reading from the N-terminus, the 95-residue chain is Aspartyl/glutamyl-tRNA(Asn/Gln) amidotransferase subunit C (95 aa).

Belongs to the GatC family. As to quaternary structure, heterotrimer of A, B and C subunits.

The enzyme catalyses L-glutamyl-tRNA(Gln) + L-glutamine + ATP + H2O = L-glutaminyl-tRNA(Gln) + L-glutamate + ADP + phosphate + H(+). It catalyses the reaction L-aspartyl-tRNA(Asn) + L-glutamine + ATP + H2O = L-asparaginyl-tRNA(Asn) + L-glutamate + ADP + phosphate + 2 H(+). Its function is as follows. Allows the formation of correctly charged Asn-tRNA(Asn) or Gln-tRNA(Gln) through the transamidation of misacylated Asp-tRNA(Asn) or Glu-tRNA(Gln) in organisms which lack either or both of asparaginyl-tRNA or glutaminyl-tRNA synthetases. The reaction takes place in the presence of glutamine and ATP through an activated phospho-Asp-tRNA(Asn) or phospho-Glu-tRNA(Gln). This is Aspartyl/glutamyl-tRNA(Asn/Gln) amidotransferase subunit C from Halorhodospira halophila (strain DSM 244 / SL1) (Ectothiorhodospira halophila (strain DSM 244 / SL1)).